Here is a 21-residue protein sequence, read N- to C-terminus: Hemocyanin subunit 1 (21 aa).

Belongs to the tyrosinase family. Hemocyanin subfamily. Hemolymph.

It localises to the secreted. It is found in the extracellular space. In terms of biological role, hemocyanins are copper-containing oxygen carriers occurring freely dissolved in the hemolymph of many mollusks and arthropods. This is Hemocyanin subunit 1 from Maja squinado (Mediterranean spider crab).